A 271-amino-acid chain; its full sequence is Small ribosomal subunit protein uS2 (271 aa).

Residues 235-271 (FDAKNPLKPQNYNAPNKRPYQDSPRKPSYQNQNQNQI) form a disordered region. Residues 262-271 (SYQNQNQNQI) are compositionally biased toward polar residues.

This sequence belongs to the universal ribosomal protein uS2 family.

The chain is Small ribosomal subunit protein uS2 from Onion yellows phytoplasma (strain OY-M).